A 202-amino-acid chain; its full sequence is Glycerol-3-phosphate acyltransferase (202 aa).

A run of 6 helical transmembrane segments spans residues 3-23 (NLII…LILT), 61-81 (IATI…LKFL), 87-107 (LLWS…YLLF), 117-137 (AGAM…VWAV), 144-164 (ISSL…FIFN), and 167-187 (LEIH…YKHL).

Belongs to the PlsY family. As to quaternary structure, probably interacts with PlsX.

It localises to the cell inner membrane. It carries out the reaction an acyl phosphate + sn-glycerol 3-phosphate = a 1-acyl-sn-glycero-3-phosphate + phosphate. The protein operates within lipid metabolism; phospholipid metabolism. Catalyzes the transfer of an acyl group from acyl-phosphate (acyl-PO(4)) to glycerol-3-phosphate (G3P) to form lysophosphatidic acid (LPA). This enzyme utilizes acyl-phosphate as fatty acyl donor, but not acyl-CoA or acyl-ACP. The polypeptide is Glycerol-3-phosphate acyltransferase (Campylobacter jejuni subsp. doylei (strain ATCC BAA-1458 / RM4099 / 269.97)).